A 109-amino-acid polypeptide reads, in one-letter code: Spermidine export protein MdtI (109 aa).

4 helical membrane passes run 6-26 (WIHGAWLGLAIMLEIAANVLL), 36-56 (CYGILSLAAVLAAFSALSQAV), 64-84 (AYALWGGFGIAATLAAGWVLF), and 88-108 (LNPKGWVGVILLLAGMVMIKF).

The protein belongs to the drug/metabolite transporter (DMT) superfamily. Small multidrug resistance (SMR) (TC 2.A.7.1) family. MdtI subfamily. In terms of assembly, forms a complex with MdtJ.

The protein localises to the cell inner membrane. Its function is as follows. Catalyzes the excretion of spermidine. This chain is Spermidine export protein MdtI, found in Salmonella choleraesuis (strain SC-B67).